Reading from the N-terminus, the 422-residue chain is Serine--tRNA ligase (422 aa).

Residue 238-240 (TSE) participates in L-serine binding. Residue 269–271 (RKE) coordinates ATP. Position 292 (Glu292) interacts with L-serine. 356-359 (EISS) lines the ATP pocket. Residue Ser390 participates in L-serine binding.

The protein belongs to the class-II aminoacyl-tRNA synthetase family. Type-1 seryl-tRNA synthetase subfamily. As to quaternary structure, homodimer. The tRNA molecule binds across the dimer.

It localises to the cytoplasm. The enzyme catalyses tRNA(Ser) + L-serine + ATP = L-seryl-tRNA(Ser) + AMP + diphosphate + H(+). It carries out the reaction tRNA(Sec) + L-serine + ATP = L-seryl-tRNA(Sec) + AMP + diphosphate + H(+). Its pathway is aminoacyl-tRNA biosynthesis; selenocysteinyl-tRNA(Sec) biosynthesis; L-seryl-tRNA(Sec) from L-serine and tRNA(Sec): step 1/1. In terms of biological role, catalyzes the attachment of serine to tRNA(Ser). Is also able to aminoacylate tRNA(Sec) with serine, to form the misacylated tRNA L-seryl-tRNA(Sec), which will be further converted into selenocysteinyl-tRNA(Sec). This chain is Serine--tRNA ligase, found in Helicobacter hepaticus (strain ATCC 51449 / 3B1).